A 252-amino-acid chain; its full sequence is Triosephosphate isomerase (252 aa).

9-11 (NWK) contributes to the substrate binding site. The active-site Electrophile is histidine 100. The active-site Proton acceptor is the glutamate 171. Substrate-binding positions include glycine 177, serine 216, and 237-238 (GG).

This sequence belongs to the triosephosphate isomerase family. Homodimer.

It is found in the cytoplasm. It carries out the reaction D-glyceraldehyde 3-phosphate = dihydroxyacetone phosphate. It functions in the pathway carbohydrate biosynthesis; gluconeogenesis. Its pathway is carbohydrate degradation; glycolysis; D-glyceraldehyde 3-phosphate from glycerone phosphate: step 1/1. Its function is as follows. Involved in the gluconeogenesis. Catalyzes stereospecifically the conversion of dihydroxyacetone phosphate (DHAP) to D-glyceraldehyde-3-phosphate (G3P). The protein is Triosephosphate isomerase of Polynucleobacter asymbioticus (strain DSM 18221 / CIP 109841 / QLW-P1DMWA-1) (Polynucleobacter necessarius subsp. asymbioticus).